The following is a 348-amino-acid chain: Phospho-2-dehydro-3-deoxyheptonate aldolase, Trp-sensitive (348 aa).

This sequence belongs to the class-I DAHP synthase family.

The enzyme catalyses D-erythrose 4-phosphate + phosphoenolpyruvate + H2O = 7-phospho-2-dehydro-3-deoxy-D-arabino-heptonate + phosphate. The protein operates within metabolic intermediate biosynthesis; chorismate biosynthesis; chorismate from D-erythrose 4-phosphate and phosphoenolpyruvate: step 1/7. Functionally, stereospecific condensation of phosphoenolpyruvate (PEP) and D-erythrose-4-phosphate (E4P) giving rise to 3-deoxy-D-arabino-heptulosonate-7-phosphate (DAHP). The sequence is that of Phospho-2-dehydro-3-deoxyheptonate aldolase, Trp-sensitive (aroH) from Enterobacter agglomerans (Erwinia herbicola).